The following is a 224-amino-acid chain: Coiled-coil domain-containing protein 43 (224 aa).

Lys-95 participates in a covalent cross-link: Glycyl lysine isopeptide (Lys-Gly) (interchain with G-Cter in SUMO1). Coiled-coil stretches lie at residues Ser-121 to Ala-145 and Arg-177 to Gln-218. Residues Val-138–Asp-149 are compositionally biased toward acidic residues. 2 disordered regions span residues Val-138–Asn-157 and Ala-176–Arg-224. A Phosphothreonine modification is found at Thr-139. The segment covering Ala-176 to Glu-211 has biased composition (basic and acidic residues). A compositionally biased stretch (basic residues) spans Lys-212–Arg-224.

Belongs to the CCDC43 family.

This Homo sapiens (Human) protein is Coiled-coil domain-containing protein 43 (CCDC43).